The sequence spans 285 residues: 4-diphosphocytidyl-2-C-methyl-D-erythritol kinase (285 aa).

Lys11 is an active-site residue. 95–105 (PVAAGIGGGSA) serves as a coordination point for ATP. The active site involves Asp137.

This sequence belongs to the GHMP kinase family. IspE subfamily.

It carries out the reaction 4-CDP-2-C-methyl-D-erythritol + ATP = 4-CDP-2-C-methyl-D-erythritol 2-phosphate + ADP + H(+). The protein operates within isoprenoid biosynthesis; isopentenyl diphosphate biosynthesis via DXP pathway; isopentenyl diphosphate from 1-deoxy-D-xylulose 5-phosphate: step 3/6. Its function is as follows. Catalyzes the phosphorylation of the position 2 hydroxy group of 4-diphosphocytidyl-2C-methyl-D-erythritol. The chain is 4-diphosphocytidyl-2-C-methyl-D-erythritol kinase from Paramagnetospirillum magneticum (strain ATCC 700264 / AMB-1) (Magnetospirillum magneticum).